The primary structure comprises 248 residues: DNA repair protein RecO (248 aa).

Belongs to the RecO family.

Functionally, involved in DNA repair and RecF pathway recombination. The polypeptide is DNA repair protein RecO (Bradyrhizobium sp. (strain ORS 278)).